The chain runs to 354 residues: Probable L-ascorbate-6-phosphate lactonase UlaG (354 aa).

The protein belongs to the UlaG family. A divalent metal cation is required as a cofactor.

The protein resides in the cytoplasm. The enzyme catalyses L-ascorbate 6-phosphate + H2O = 3-dehydro-L-gulonate 6-phosphate. It participates in cofactor degradation; L-ascorbate degradation; D-xylulose 5-phosphate from L-ascorbate: step 1/4. In terms of biological role, probably catalyzes the hydrolysis of L-ascorbate-6-P into 3-keto-L-gulonate-6-P. Is essential for L-ascorbate utilization under anaerobic conditions. The sequence is that of Probable L-ascorbate-6-phosphate lactonase UlaG from Shigella boydii serotype 4 (strain Sb227).